A 218-amino-acid polypeptide reads, in one-letter code: Ras-related protein R-Ras (218 aa).

Residues M1–H30 form a disordered region. Positions S7 to G20 are enriched in gly residues. GTP is bound at residue G36–A44. An Effector region motif is present at residues Y58–Y66. Residues D83–Q87, N142–D145, and S172–K174 each bind GTP. C215 bears the Cysteine methyl ester mark. C215 carries the S-geranylgeranyl cysteine lipid modification. Residues V216–L218 constitute a propeptide, removed in mature form.

This sequence belongs to the small GTPase superfamily. Ras family. As to quaternary structure, interacts with PLCE1. Interacts (active GTP-bound form preferentially) with RGS14. Interacts with OSBPL3. Interacts with ZDHHC19. S-palmitoylated by ZDHHC19, leading to increased association with membranes and with rafts/caveolae as well as enhanced cell viability.

It localises to the cell membrane. The enzyme catalyses GTP + H2O = GDP + phosphate + H(+). Functionally, GTP-binding protein with GTPase activity, likely involved in the regulation of MAPK signaling pathway and thereby controlling multiple cellular processes. Regulates the organization of the actin cytoskeleton. With OSPBL3, modulates integrin beta-1 (ITGB1) activity. This chain is Ras-related protein R-Ras (RRAS), found in Homo sapiens (Human).